The primary structure comprises 191 residues: LHFPL tetraspan subfamily member 7 protein (191 aa).

A run of 4 helical transmembrane segments spans residues Met6–Met26, Ile72–Leu92, Tyr112–Leu132, and Leu154–Ile174.

This sequence belongs to the TMEM211 family.

It is found in the membrane. In Xenopus tropicalis (Western clawed frog), this protein is LHFPL tetraspan subfamily member 7 protein (lhfpl7).